The chain runs to 1189 residues: Phosphatidylinositol 3,4,5-trisphosphate 5-phosphatase 1 (1189 aa).

An SH2 domain is found at 5–101; it reads WNHGNITRSK…GLVTHLQYPV (97 aa). Residues 103 to 117 show a composition bias toward acidic residues; it reads LEEEDTGDDPEEDTV. The tract at residues 103-132 is disordered; sequence LEEEDTGDDPEEDTVESVVSPPELPPRNIP. Residues 124–129 carry the SH3-binding 1 motif; the sequence is PELPPR. At Ser243 the chain carries Phosphoserine. The interval 870-906 is disordered; that stretch reads TERDESSGPKTLKSLTSHDPMKQWEVTSRAPPCSGSS. The NPXY motif 1 motif lies at 912-915; sequence NPNY. Position 915 is a phosphotyrosine (Tyr915). Positions 922–1189 are disordered; sequence GPPMPLHVKQ…PGPLGRTAMQ (268 aa). Positions 931–943 are enriched in polar residues; sequence QTLSPDQQPTAWS. Position 934 is a phosphoserine (Ser934). Tyr944 is subject to Phosphotyrosine. Ser960 bears the Phosphoserine mark. A compositionally biased stretch (pro residues) spans 961–971; it reads PPTPPGQPPIS. A Phosphothreonine modification is found at Thr963. An SH3-binding 2 motif is present at residues 969-974; that stretch reads PISPKK. Position 971 is a phosphoserine (Ser971). The tract at residues 1016–1030 is interaction with DAB2; sequence MFENPLYGSLSSFPK. An NPXY motif 2 motif is present at residues 1019 to 1022; the sequence is NPLY. Residue Tyr1022 is modified to Phosphotyrosine. Positions 1033–1047 are enriched in basic and acidic residues; sequence PRKDQESPKMPRKEP. Positions 1040–1051 match the SH3-binding 3 motif; sequence PKMPRKEPPPCP. Over residues 1134 to 1145 the composition is skewed to pro residues; sequence PPTPTPRPPLPV. The segment covering 1157 to 1177 has biased composition (basic and acidic residues); it reads KGRDYRDNTELPHHGKHRPEE.

It belongs to the inositol 1,4,5-trisphosphate 5-phosphatase family. As to quaternary structure, interacts with tyrosine phosphorylated form of SHC1. Interacts with tyrosine phosphorylated form of DOK1. Interacts with tyrosine phosphorylated form of DOK3. Interacts with tyrosine phosphorylated form of SLAMF1/CD150. Interacts with PTPN11 in response to IL-3. Interacts with receptor EPOR. Interacts with receptors MS4A2/FCER1B and FCER1G. Interacts with receptors FCGR2B and FCGR3. Interacts with receptor FCGR2A, leading to regulate gene expression during the phagocytic process. Interacts with GRB2. Interacts with PLCG1. Interacts with tyrosine kinases SRC and TEC. Interacts with c-Met/MET. Interacts with MILR1 (tyrosine-phosphorylated). Can weakly interact (via NPXY motif 2) with DAB2 (via PID domain); the interaction is impaired by tyrosine phosphorylation of the NPXY motif. Interacts with FCRL3 and FCRL6 (tyrosine phosphorylated form). Interacts (via SH2 domain) with tyrosine phosphorylated KLRC1 (via ITIM). Interacts with MPL/TPOR. In terms of processing, tyrosine phosphorylated by the members of the SRC family after exposure to a diverse array of extracellular stimuli such as cytokines, growth factors, antibodies, chemokines, integrin ligands and hypertonic and oxidative stress. Phosphorylated upon IgG receptor FCGR2B-binding. As to expression, specifically expressed in immune and hematopoietic cells. Expressed in bone marrow and blood cells. Levels vary considerably within this compartment. Present in at least 74% of immature CD34+ cells, whereas within the more mature population of CD33+ cells, it is present in only 10% of cells. Present in the majority of T-cells, while it is present in a minority of B-cells (at protein level).

The protein resides in the cytoplasm. The protein localises to the cell membrane. Its subcellular location is the membrane raft. It is found in the cytoskeleton. It localises to the membrane. It carries out the reaction a 1,2-diacyl-sn-glycero-3-phospho-(1D-myo-inositol-3,4,5-trisphosphate) + H2O = a 1,2-diacyl-sn-glycero-3-phospho-(1D-myo-inositol-3,4-bisphosphate) + phosphate. The catalysed reaction is 1D-myo-inositol 1,3,4,5-tetrakisphosphate + H2O = 1D-myo-inositol 1,3,4-trisphosphate + phosphate. The enzyme catalyses a 1,2-diacyl-sn-glycero-3-phospho-(1D-myo-inositol-4,5-bisphosphate) + H2O = a 1,2-diacyl-sn-glycero-3-phospho-(1D-myo-inositol 4-phosphate) + phosphate. Its activity is regulated as follows. Activated upon translocation to the sites of synthesis of PtdIns(3,4,5)P3 in the membrane. Functionally, phosphatidylinositol (PtdIns) phosphatase that specifically hydrolyzes the 5-phosphate of phosphatidylinositol-3,4,5-trisphosphate (PtdIns(3,4,5)P3) to produce PtdIns(3,4)P2, thereby negatively regulating the PI3K (phosphoinositide 3-kinase) pathways. Able also to hydrolyzes the 5-phosphate of phosphatidylinositol-4,5-bisphosphate (PtdIns(4,5)P3) and inositol 1,3,4,5-tetrakisphosphate. Acts as a negative regulator of B-cell antigen receptor signaling. Mediates signaling from the FC-gamma-RIIB receptor (FCGR2B), playing a central role in terminating signal transduction from activating immune/hematopoietic cell receptor systems. Acts as a negative regulator of myeloid cell proliferation/survival and chemotaxis, mast cell degranulation, immune cells homeostasis, integrin alpha-IIb/beta-3 signaling in platelets and JNK signaling in B-cells. Regulates proliferation of osteoclast precursors, macrophage programming, phagocytosis and activation and is required for endotoxin tolerance. Involved in the control of cell-cell junctions, CD32a signaling in neutrophils and modulation of EGF-induced phospholipase C activity. Key regulator of neutrophil migration, by governing the formation of the leading edge and polarization required for chemotaxis. Modulates FCGR3/CD16-mediated cytotoxicity in NK cells. Mediates the activin/TGF-beta-induced apoptosis through its Smad-dependent expression. The polypeptide is Phosphatidylinositol 3,4,5-trisphosphate 5-phosphatase 1 (INPP5D) (Homo sapiens (Human)).